Reading from the N-terminus, the 264-residue chain is O-methyltransferase resE (264 aa).

Positions 97 and 142 each coordinate S-adenosyl-L-methionine.

The protein belongs to the methyltransferase superfamily.

The enzyme catalyses desmethylrestrictinol + S-adenosyl-L-methionine = restrictinol + S-adenosyl-L-homocysteine + H(+). It participates in antifungal biosynthesis. In terms of biological role, O-methyltransferase; part of the gene cluster that mediates the biosynthesis of the tetrahydropyranyl antifungal agent restricticin that acts as an inhibitor of CYP51 and blocks the ergosterol biosynthesis. Within the pathway, resE uses S-adenosylmethionine to methylate position C4 of desmethylrestrictinol to produce restrictinol. The highly reducing polyketide synthase resH, the short chain dehydrogenase resG, the cyclase resF, the FAD-dependent monooxygenase resA and the enoylreductase resD are required to generate the first stable intermediate desmethylrestrictinol. ResH with resD biosynthesize the first polyketide chain intermediate that is reduced by resG, followed by epoxidation by resA before 6-endo cyclization via epoxide opening by resF leads to desmethylrestrictinol. The methyltransferase resE then catalyzes the C4 O-methylation of desmethylrestrictinol to produce restrictinol, and the nonribosomal peptide synthetase resC catalyzes the C3 esterification of restrictinol with glycine that leads to restricticin. The protein is O-methyltransferase resE of Aspergillus sclerotiorum.